Here is a 334-residue protein sequence, read N- to C-terminus: Protein-methionine-sulfoxide reductase catalytic subunit MsrP (334 aa).

Positions 1 to 44 form a signal peptide, tat-type signal; sequence MKKNQFLKESDVTAESVFFMKRRQVLKALGISAAALSLPHAAHA. Residues Asn88, 91–92, Cys146, Thr181, Asn233, Arg238, and 249–251 each bind Mo-molybdopterin; these read YE and GIK.

The protein belongs to the MsrP family. In terms of assembly, heterodimer of a catalytic subunit (MsrP) and a heme-binding subunit (MsrQ). Mo-molybdopterin serves as cofactor. In terms of processing, predicted to be exported by the Tat system. The position of the signal peptide cleavage has not been experimentally proven.

The protein localises to the periplasm. The enzyme catalyses L-methionyl-[protein] + a quinone + H2O = L-methionyl-(S)-S-oxide-[protein] + a quinol. The catalysed reaction is L-methionyl-[protein] + a quinone + H2O = L-methionyl-(R)-S-oxide-[protein] + a quinol. Its function is as follows. Part of the MsrPQ system that repairs oxidized periplasmic proteins containing methionine sulfoxide residues (Met-O), using respiratory chain electrons. Thus protects these proteins from oxidative-stress damage caused by reactive species of oxygen and chlorine generated by the host defense mechanisms. MsrPQ is essential for the maintenance of envelope integrity under bleach stress, rescuing a wide series of structurally unrelated periplasmic proteins from methionine oxidation, including the primary periplasmic chaperone SurA and the lipoprotein Pal. The catalytic subunit MsrP is non-stereospecific, being able to reduce both (R-) and (S-) diastereoisomers of methionine sulfoxide. The polypeptide is Protein-methionine-sulfoxide reductase catalytic subunit MsrP (Shigella sonnei (strain Ss046)).